The following is a 695-amino-acid chain: Methionine synthase reductase (695 aa).

One can recognise a Flavodoxin-like domain in the interval 4–147 (FLLLYATQRG…VVEPWINGLW (144 aa)). FMN-binding positions include 10–14 (TQRGQ) and 93–124 (LLGL…QRFY). Residues 166–245 (TLTMASHASR…ASLNIPSLPP (80 aa)) form a hinge region. Phosphoserine is present on residues serine 171 and serine 187. Residues 269–531 (DPVFHVPVSK…PRTTNSFHLP (263 aa)) form the FAD-binding FR-type domain. An NADP(+)-binding site is contributed by lysine 289. Residues 449 to 452 (RPYS) and 485 to 488 (GVCT) contribute to the FAD site. Residues 608–609 (SR), 622–624 (YVQ), and aspartate 657 each bind NADP(+). Tryptophan 695 is an FAD binding site.

Forms a multiprotein complex with MMACHC, MMADHC and MTR. It depends on FAD as a cofactor. Requires FMN as cofactor.

Its subcellular location is the cytoplasm. The catalysed reaction is 2 methylcob(III)alamin-[methionine synthase] + 2 S-adenosyl-L-homocysteine + NADP(+) + H(+) = 2 cob(II)alamin-[methionine synthase] + 2 S-adenosyl-L-methionine + NADPH. It catalyses the reaction 2 cob(II)alamin + A + 2 H2O + 2 H(+) = 2 aquacob(III)alamin + AH2. Its function is as follows. Key enzyme in methionine and folate homeostasis responsible for the reactivation of methionine synthase (MTR/MS) activity by catalyzing the reductive methylation of MTR-bound cob(II)alamin. Cobalamin (vitamin B12) forms a complex with MTR to serve as an intermediary in methyl transfer reactions that cycles between MTR-bound methylcob(III)alamin and MTR bound-cob(I)alamin forms, and occasional oxidative escape of the cob(I)alamin intermediate during the catalytic cycle leads to the inactive cob(II)alamin species. The processing of cobalamin in the cytosol occurs in a multiprotein complex composed of at least MMACHC, MMADHC, MTRR and MTR which may contribute to shuttle safely and efficiently cobalamin towards MTR in order to produce methionine. Also necessary for the utilization of methyl groups from the folate cycle, thereby affecting transgenerational epigenetic inheritance. Also acts as a molecular chaperone for methionine synthase by stabilizing apoMTR and incorporating methylcob(III)alamin into apoMTR to form the holoenzyme. Also serves as an aquacob(III)alamin reductase by reducing aquacob(III)alamin to cob(II)alamin; this reduction leads to stimulation of the conversion of apoMTR and aquacob(III)alamin to MTR holoenzyme. The protein is Methionine synthase reductase (MTRR) of Bos taurus (Bovine).